The chain runs to 473 residues: Adenosylhomocysteinase (473 aa).

The substrate site is built by threonine 64, aspartate 139, and glutamate 199. 200-202 (TTT) is an NAD(+) binding site. Substrate-binding residues include lysine 229 and aspartate 233. NAD(+)-binding positions include asparagine 234, 263–268 (GYGDVG), glutamate 286, asparagine 321, 342–344 (IGH), and asparagine 387.

It belongs to the adenosylhomocysteinase family. It depends on NAD(+) as a cofactor.

It is found in the cytoplasm. It carries out the reaction S-adenosyl-L-homocysteine + H2O = L-homocysteine + adenosine. It participates in amino-acid biosynthesis; L-homocysteine biosynthesis; L-homocysteine from S-adenosyl-L-homocysteine: step 1/1. May play a key role in the regulation of the intracellular concentration of adenosylhomocysteine. The protein is Adenosylhomocysteinase of Burkholderia thailandensis (strain ATCC 700388 / DSM 13276 / CCUG 48851 / CIP 106301 / E264).